Consider the following 114-residue polypeptide: Large ribosomal subunit protein uL22 (114 aa).

It belongs to the universal ribosomal protein uL22 family. In terms of assembly, part of the 50S ribosomal subunit.

In terms of biological role, this protein binds specifically to 23S rRNA; its binding is stimulated by other ribosomal proteins, e.g. L4, L17, and L20. It is important during the early stages of 50S assembly. It makes multiple contacts with different domains of the 23S rRNA in the assembled 50S subunit and ribosome. Its function is as follows. The globular domain of the protein is located near the polypeptide exit tunnel on the outside of the subunit, while an extended beta-hairpin is found that lines the wall of the exit tunnel in the center of the 70S ribosome. In Streptococcus thermophilus (strain CNRZ 1066), this protein is Large ribosomal subunit protein uL22.